A 373-amino-acid polypeptide reads, in one-letter code: Probable tRNA sulfurtransferase (373 aa).

The region spanning 54 to 158 (NKNIEELSKV…NDVAYFYYKI (105 aa)) is the THUMP domain. Residues 176–177 (LF), 201–202 (NF), K256, G278, and Q287 contribute to the ATP site.

It belongs to the ThiI family.

It localises to the cytoplasm. It carries out the reaction [ThiI sulfur-carrier protein]-S-sulfanyl-L-cysteine + a uridine in tRNA + 2 reduced [2Fe-2S]-[ferredoxin] + ATP + H(+) = [ThiI sulfur-carrier protein]-L-cysteine + a 4-thiouridine in tRNA + 2 oxidized [2Fe-2S]-[ferredoxin] + AMP + diphosphate. The catalysed reaction is [ThiS sulfur-carrier protein]-C-terminal Gly-Gly-AMP + S-sulfanyl-L-cysteinyl-[cysteine desulfurase] + AH2 = [ThiS sulfur-carrier protein]-C-terminal-Gly-aminoethanethioate + L-cysteinyl-[cysteine desulfurase] + A + AMP + 2 H(+). Its pathway is cofactor biosynthesis; thiamine diphosphate biosynthesis. Its function is as follows. Catalyzes the ATP-dependent transfer of a sulfur to tRNA to produce 4-thiouridine in position 8 of tRNAs, which functions as a near-UV photosensor. Also catalyzes the transfer of sulfur to the sulfur carrier protein ThiS, forming ThiS-thiocarboxylate. This is a step in the synthesis of thiazole, in the thiamine biosynthesis pathway. The sulfur is donated as persulfide by IscS. This is Probable tRNA sulfurtransferase from Saccharolobus islandicus (strain Y.N.15.51 / Yellowstone #2) (Sulfolobus islandicus).